The following is a 177-amino-acid chain: Bifunctional protein PyrR (177 aa).

The short motif at Val-99–Thr-111 is the PRPP-binding element.

The protein belongs to the purine/pyrimidine phosphoribosyltransferase family. PyrR subfamily.

It carries out the reaction UMP + diphosphate = 5-phospho-alpha-D-ribose 1-diphosphate + uracil. Functionally, regulates the transcription of the pyrimidine nucleotide (pyr) operon in response to exogenous pyrimidines. In terms of biological role, also displays a weak uracil phosphoribosyltransferase activity which is not physiologically significant. This chain is Bifunctional protein PyrR, found in Akkermansia muciniphila (strain ATCC BAA-835 / DSM 22959 / JCM 33894 / BCRC 81048 / CCUG 64013 / CIP 107961 / Muc).